Reading from the N-terminus, the 114-residue chain is ATP synthase subunit beta, mitochondrial (114 aa).

44–51 (GGAGVGKT) contacts ATP.

This sequence belongs to the ATPase alpha/beta chains family. In terms of assembly, F-type ATPases have 2 components, CF(1) - the catalytic core - and CF(0) - the membrane proton channel. CF(1) has five subunits: alpha(3), beta(3), gamma(1), delta(1), epsilon(1). CF(0) has three main subunits: a, b and c.

It is found in the mitochondrion. Its subcellular location is the mitochondrion inner membrane. It catalyses the reaction ATP + H2O + 4 H(+)(in) = ADP + phosphate + 5 H(+)(out). Functionally, mitochondrial membrane ATP synthase (F(1)F(0) ATP synthase or Complex V) produces ATP from ADP in the presence of a proton gradient across the membrane which is generated by electron transport complexes of the respiratory chain. F-type ATPases consist of two structural domains, F(1) - containing the extramembraneous catalytic core, and F(0) - containing the membrane proton channel, linked together by a central stalk and a peripheral stalk. During catalysis, ATP synthesis in the catalytic domain of F(1) is coupled via a rotary mechanism of the central stalk subunits to proton translocation. Subunits alpha and beta form the catalytic core in F(1). Rotation of the central stalk against the surrounding alpha(3)beta(3) subunits leads to hydrolysis of ATP in three separate catalytic sites on the beta subunits. The protein is ATP synthase subunit beta, mitochondrial (atp2) of Penicillium glabrum (Penicillium frequentans).